The chain runs to 1172 residues: DNA-directed RNA polymerases IV and V subunit 2 (1172 aa).

Residue D786 participates in Mg(2+) binding. C1108, C1111, C1133, and C1136 together coordinate Zn(2+). A C4-type zinc finger spans residues 1108–1136 (CRKCKTYANVIERTPSSGRKIRGPYCRVC).

Belongs to the RNA polymerase beta chain family. Component of the RNA polymerase IV and V complexes. Interacts with SSH1, NRPD1 and NRPE1. Mostly expressed in seedlings, flowers and roots, present ubiquitously, except in sperm cells.

It is found in the nucleus. It catalyses the reaction RNA(n) + a ribonucleoside 5'-triphosphate = RNA(n+1) + diphosphate. Functionally, DNA-dependent RNA polymerase catalyzes the transcription of DNA into RNA using the four ribonucleoside triphosphates as substrates. Second largest component of RNA polymerases IV and V which mediate short-interfering RNAs (siRNA) accumulation and subsequent RNA-directed DNA methylation-dependent (RdDM) transcriptional gene silencing (TGS) of endogenous repeated sequences, including transposable elements. Proposed to contribute to the polymerase catalytic activity and forms the polymerase active center together with the largest subunit. Also required for full erasure of methylation when the RNA trigger is withdrawn. Required for intercellular RNA interference (RNAi) leading to systemic post-transcriptional gene silencing. Involved in the maintenance of post-transcriptional RNA silencing. During interphase, mediates siRNA-independent heterochromatin association and methylation into chromocenters and condensation and cytosine methylation at pericentromeric major repeats. Required for complete maintenance of the 35S promoter homology-dependent TGS in transgenic plants and for the initial establishment of DNA methylation. This is DNA-directed RNA polymerases IV and V subunit 2 (NRPD2) from Arabidopsis thaliana (Mouse-ear cress).